Consider the following 1806-residue polypeptide: uncharacterized protein (1806 aa).

2 disordered regions span residues 38-131 (EASG…SPLF) and 158-282 (KAVS…KPRP). Residues 51 to 70 (KSPLRSPARLLPLPRLAPKP) are compositionally biased toward low complexity. Ser52, Ser56, Ser79, Ser87, Ser88, Ser92, and Ser128 each carry phosphoserine. Positions 82-100 (PSLRPSSTGPSPSGGLSEE) are enriched in low complexity. Basic and acidic residues predominate over residues 226 to 236 (DTARPLVEPRP). A phosphoserine mark is found at Ser244 and Ser284. Disordered stretches follow at residues 299–320 (RKVA…ERPR), 355–431 (KEKM…GGEW), 456–604 (SESP…PEDD), and 627–696 (QSGR…ELRP). Phosphoserine is present on Ser366. Residue Thr378 is modified to Phosphothreonine. The residue at position 384 (Ser384) is a Phosphoserine. Over residues 386–400 (WEEKAKLDPEPEKAA) the composition is skewed to basic and acidic residues. Ser404 carries the phosphoserine modification. Basic and acidic residues predominate over residues 412-422 (ELAEVKSRVAD). The span at 456 to 470 (SESPLATPASPSAAP) shows a compositional bias: low complexity. 2 positions are modified to phosphoserine: Ser458 and Ser508. Residues 514–523 (LFSSSASSNE) are compositionally biased toward polar residues. 2 stretches are compositionally biased toward basic and acidic residues: residues 524–549 (VKYE…EGHS) and 564–573 (TLRDKSRQTE). Phosphothreonine is present on Thr600. 2 stretches are compositionally biased toward basic and acidic residues: residues 641 to 652 (AHARVSEPRPRP) and 661 to 674 (DPPD…ENSR). The residue at position 749 (Ser749) is a Phosphoserine. Disordered stretches follow at residues 860–901 (QHEG…QART), 969–989 (SPHV…ALRK), and 1000–1019 (QEVN…KQGS). A compositionally biased stretch (polar residues) spans 889 to 900 (RATNGPSDSQAR). A phosphoserine mark is found at Ser969 and Ser981. Basic and acidic residues predominate over residues 969–978 (SPHVGHRRTD). Thr1059 is subject to Phosphothreonine. Residues Ser1063 and Ser1154 each carry the phosphoserine modification. Residues 1134–1178 (RGSEDGPRPQSNWKESANKMSPSGGAPQTTPTLRSRPKDLPVRRK) form a disordered region. Residues 1142 to 1166 (PQSNWKESANKMSPSGGAPQTTPTL) show a composition bias toward polar residues. Thr1163 is subject to Phosphothreonine. Residues 1169–1178 (RPKDLPVRRK) are compositionally biased toward basic and acidic residues. Residues Thr1179 and Thr1185 each carry the phosphothreonine modification. Disordered regions lie at residues 1216–1265 (PGEA…PASS) and 1291–1493 (KSSP…VASV). Ser1224 is modified (phosphoserine). Thr1226 is modified (phosphothreonine). 2 stretches are compositionally biased toward basic and acidic residues: residues 1244 to 1254 (EQRRRSLKEMP) and 1317 to 1331 (DPRK…DRKA). Ser1366 carries the post-translational modification Phosphoserine. Composition is skewed to basic and acidic residues over residues 1393-1410 (DHPR…RAYS) and 1426-1437 (HEARERRREQPK). The residue at position 1441 (Ser1441) is a Phosphoserine. Residues 1462–1483 (DSHKVLPRDLEKEDAPQEKERP) show a composition bias toward basic and acidic residues. A phosphoserine mark is found at Ser1488 and Ser1506. Disordered stretches follow at residues 1512 to 1627 (QLKQ…KRVD) and 1642 to 1806 (ALKT…ENQV). Residues 1522-1531 (TEPKDTDTLV) show a composition bias toward basic and acidic residues. Residues 1537–1568 (QYGTWTEQCQSGESLATESPDSSATSTRKQPP) show a composition bias toward polar residues. 2 positions are modified to phosphoserine: Ser1555 and Ser1662. Residues 1649–1666 (LSKRSRRRAPISHSLRRS) are compositionally biased toward basic residues. 2 stretches are compositionally biased toward basic and acidic residues: residues 1667-1677 (RFSESESRSPL) and 1689-1714 (DSTE…ERTP). A phosphoserine mark is found at Ser1701, Ser1757, Ser1760, and Ser1786. Residues 1753-1764 (PQPKSPKSPFQP) are compositionally biased toward low complexity.

This is an uncharacterized protein from Homo sapiens (Human).